A 464-amino-acid chain; its full sequence is Probable mannosyltransferase KTR4 (464 aa).

Residues 1-11 are Cytoplasmic-facing; it reads MRFLSKRILKP. A helical; Signal-anchor for type II membrane protein membrane pass occupies residues 12-32; that stretch reads VLSVIILISIAVTVVLYFLTA. The segment at 33-130 is stem region; the sequence is NENYLQAVKD…NLVRSGDPLA (98 aa). The Lumenal portion of the chain corresponds to 33-464; it reads NENYLQAVKD…SMSEEELEMY (432 aa). The interval 131 to 464 is catalytic; sequence GKAKGTILSL…SMSEEELEMY (334 aa). Residue Glu-352 is the Nucleophile of the active site.

It belongs to the glycosyltransferase 15 family.

It is found in the membrane. Its function is as follows. Possible glycosyltransferase that transfers an alpha-D-mannosyl residue from GDP-mannose into lipid-linked oligosaccharide, forming an alpha-(1-&gt;2)-D-mannosyl-D-mannose linkage. The protein is Probable mannosyltransferase KTR4 (KTR4) of Saccharomyces cerevisiae (strain ATCC 204508 / S288c) (Baker's yeast).